The primary structure comprises 310 residues: Transcriptional activator BRRF1 (310 aa).

Belongs to the lymphocryptovirus BBRF1 family.

Functionally, enhances the ability of BRLF1 to induce lytic infection by cooperating with it to transcriptionally activate the BZLF1 promoter. The polypeptide is Transcriptional activator BRRF1 (Epstein-Barr virus (strain AG876) (HHV-4)).